A 64-amino-acid chain; its full sequence is p7b (64 aa).

At 1–12 (MECVCVDSSWPQ) the chain is on the cytoplasmic side. A helical; Signal-anchor for type II membrane protein membrane pass occupies residues 13 to 30 (WLRNLILGILISSILFIL). The Lumenal portion of the chain corresponds to 31–64 (TKTQDTVAVYHEPSVYSIDQTQKFQKIDIHNGGK).

Belongs to the gammacarmovirus double gene block protein 2 family.

Its subcellular location is the host endoplasmic reticulum membrane. In terms of biological role, required for cell-to-cell movement of virions in the host plant together with p7a. This chain is p7b, found in Maize chlorotic mottle virus (isolate United States/Kansas/1987) (MCMV).